A 415-amino-acid polypeptide reads, in one-letter code: Granaticin polyketide putative beta-ketoacyl synthase 2 (415 aa).

The Ketosynthase family 3 (KS3) domain occupies 6-406 (RRRAVVTGLS…GFNSAVVVTL (401 aa)).

The protein belongs to the thiolase-like superfamily. Beta-ketoacyl-ACP synthases family.

Its pathway is antibiotic biosynthesis; granaticin biosynthesis. The sequence is that of Granaticin polyketide putative beta-ketoacyl synthase 2 (gra-orf2) from Streptomyces violaceoruber.